Consider the following 895-residue polypeptide: MTVKKETPMMEQYLSIKKRYPDTILFYRMGDFYEMFLDDALKAAPVLEIALTSRNKTQEDPIPMCGVPHRAADVYIAKLIESGLKVAVCEQMEDPRSAQGIVKREVVRVITPGMILNEDLLDKKSNNFLAALCICQGAAGLACMDISTGMFRTTQTVAVNGKVPLSLVDEALRIDAKELLLPASFKGDPTYSQLIKAFETIQISYVGNENFKLDSARERLKEKFRTRSLEGFGCEDLTAGTAAAGAILSYVQETQLRETDHVLTLERYELNTYLIIDDRSCRNLELLKNIQTSDKKGSLISVLDCTITAMGGRLLKAWIRYPLISMDGIEARLDAVAEAKENPGIRNSLRTHLKDVYDLERLGSKISMGHANPRDLTALKISLYKLPLLFKDLNQLSASLLQGHGIEDREKVSTELFELADLINQTIREDAPLALNEGGIICDGYSPELDEILEIARNGRSWIAKTGAKEKEKTGLSSLKIKFNKVFGYFIEVSKIQSQQVPDHYIRKQTLVNAERFITDELKEVESKVLNAQERRSSLEYALFCKVRESIVQRTPSIFKIAQFLAEVDVVLALATTAEENNYTRPALNKDQVLDIEDGRHPVVEKMVVGERYIPNSIRLDNTSDQVQIITGPNMAGKSTVLRQVALISLMAQMGSFVPAARADLCIIDRIFTRVGALDNLSLGQSTFMVEMEETANIVNNAKENSLVILDEIGRGTSTFDGMSIAWAVAEYLHDLDGKGVKTLFATHYHELTRLEKLKPRVKNFNIAVKEFNDNIIFLRRLVPGGTNKSYGIQVARLAGVPDAVITKAKQILASIEQSPDQVVTQDKKQVKKQTKNNHSARSGSRQQQMDLFAGHDYDEIIKVLDQTDISTMTPIDALNLIHELKQKIRSKAMI.

G632–S639 contacts ATP. Residues V824–Q849 form a disordered region. The segment covering N837–Q849 has biased composition (polar residues).

Belongs to the DNA mismatch repair MutS family.

Its function is as follows. This protein is involved in the repair of mismatches in DNA. It is possible that it carries out the mismatch recognition step. This protein has a weak ATPase activity. In Desulforapulum autotrophicum (strain ATCC 43914 / DSM 3382 / VKM B-1955 / HRM2) (Desulfobacterium autotrophicum), this protein is DNA mismatch repair protein MutS.